Here is a 125-residue protein sequence, read N- to C-terminus: Large ribosomal subunit protein bL12 (125 aa).

The protein belongs to the bacterial ribosomal protein bL12 family. Homodimer. Part of the ribosomal stalk of the 50S ribosomal subunit. Forms a multimeric L10(L12)X complex, where L10 forms an elongated spine to which 2 to 4 L12 dimers bind in a sequential fashion. Binds GTP-bound translation factors.

Forms part of the ribosomal stalk which helps the ribosome interact with GTP-bound translation factors. Is thus essential for accurate translation. This Erythrobacter litoralis (strain HTCC2594) protein is Large ribosomal subunit protein bL12.